The sequence spans 451 residues: MNKKILFLGVGGIGVSALAIAAKRLGAHVAGYDSVANKLTAKLEALGIVIFTSPNGVDVANFDIVVYSSAILSSHPLLSQARSLGIQCLQRAMFLAVLMKDFSYSIAITGTHGKTTTSSVLATLLCQLDKYSSFIVGGVVKYADSNIQVNGTDKLVIEADESDASFLFLSPQVVIITNIDLDHMATYNNSYQTLLENFTDFVSKESVKSIYLCVDDQGCRDLLAKYNQSDKNVTSYGFSINADVQIYDYHIIDEITHFKIRYKDDDLSFKLQLPGRYNVQNATACIIACLDLGFKYEDIRNALIKVTGVARRFDLYTKVISGHQVTVIDDYGHHPVEVANSISAVRDRYPNKKIIHVFQPHRYTRNRDLIKDWPKALSLADQLILLPTYSADEQIIKGAESQDIVKGLSGYLLADGFDHAIYFLEKLANENTVILIQGAGDVTNLVEILSE.

An ATP-binding site is contributed by 110–116; the sequence is GTHGKTT.

It belongs to the MurCDEF family.

The protein localises to the cytoplasm. The enzyme catalyses UDP-N-acetyl-alpha-D-muramate + L-alanine + ATP = UDP-N-acetyl-alpha-D-muramoyl-L-alanine + ADP + phosphate + H(+). The protein operates within cell wall biogenesis; peptidoglycan biosynthesis. In terms of biological role, cell wall formation. The sequence is that of UDP-N-acetylmuramate--L-alanine ligase from Francisella tularensis subsp. tularensis (strain SCHU S4 / Schu 4).